Consider the following 128-residue polypeptide: Cytochrome c-type biogenesis protein CcmE (128 aa).

At Met-1–Arg-8 the chain is on the cytoplasmic side. A helical; Signal-anchor for type II membrane protein transmembrane segment spans residues Leu-9–Asn-29. The Periplasmic portion of the chain corresponds to Leu-30–Arg-128. 2 residues coordinate heme: His-120 and Tyr-124.

It belongs to the CcmE/CycJ family.

The protein resides in the cell inner membrane. Heme chaperone required for the biogenesis of c-type cytochromes. Transiently binds heme delivered by CcmC and transfers the heme to apo-cytochromes in a process facilitated by CcmF and CcmH. The protein is Cytochrome c-type biogenesis protein CcmE of Rickettsia canadensis (strain McKiel).